Consider the following 705-residue polypeptide: DNA polymerase alpha subunit B (705 aa).

Positions 115 to 199 are disordered; that stretch reads KKRKLHGPFS…TPTTSRQNVP (85 aa). A compositionally biased stretch (polar residues) spans 125 to 134; it reads LSDSKQTYNV. A Phosphoserine modification is found at serine 126. Residues 181–197 show a composition bias toward low complexity; that stretch reads STFQTPTTNTPTTSRQN.

The protein belongs to the DNA polymerase alpha subunit B family. In terms of assembly, DNA polymerase alpha:primase is a four subunit enzyme complex, which is assembled throughout the cell cycle, and consists of the two DNA polymerase subunits A POL1 and B POL12, and the DNA primase large PRI2 and small PRI1 subunits. Subunit B POL12 binds to subunit A POL1. Phosphorylated in a cell cycle-dependent manner.

The protein resides in the nucleus. Its function is as follows. Non-catalytic component of DNA polymerase alpha, which in a complex with DNA primase (DNA polymerase alpha:primase) constitutes a replicative polymerase. POL12 may play an essential role at the early stage of chromosomal DNA replication by coupling DNA polymerase alpha to the cellular replication machinery. Interacts with MCM10. The chain is DNA polymerase alpha subunit B (POL12) from Saccharomyces cerevisiae (strain ATCC 204508 / S288c) (Baker's yeast).